The following is a 412-amino-acid chain: Argininosuccinate synthase (412 aa).

Residues 10 to 18 (AYSGGLDTS) and Ala-36 contribute to the ATP site. L-citrulline-binding residues include Tyr-87 and Ser-92. Phosphotyrosine is present on Tyr-87. N6-acetyllysine is present on Lys-112. The residue at position 113 (Tyr-113) is a Phosphotyrosine. Residue 115-123 (SHGATGKGN) participates in ATP binding. L-aspartate-binding residues include Thr-119, Asn-123, and Asp-124. Asn-123 serves as a coordination point for L-citrulline. L-citrulline is bound at residue Arg-127. N6-acetyllysine; by CLOCK is present on residues Lys-165 and Lys-176. Positions 180 and 189 each coordinate L-citrulline. Residue Ser-180 is modified to Phosphoserine. Ser-219 bears the Phosphoserine mark. Residues Glu-270 and Tyr-282 each coordinate L-citrulline.

This sequence belongs to the argininosuccinate synthase family. Type 1 subfamily. In terms of assembly, homotetramer. Interacts with NMRAL1. Interacts with CLOCK; in a circadian manner. Forms tissue-specific complexes with ASL, SLC7A1, HSP90AA1 and nitric oxide synthase NOS1, NOS2 or NOS3; the complex regulates cell-autonomous L-arginine synthesis and citrulline recycling while channeling extracellular L-arginine to nitric oxide synthesis pathway. Post-translationally, acetylated by CLOCK in a circadian manner which negatively regulates its enzyme activity. Deacetylated by histone deacetylases.

The protein resides in the cytoplasm. It is found in the cytosol. It carries out the reaction L-citrulline + L-aspartate + ATP = 2-(N(omega)-L-arginino)succinate + AMP + diphosphate + H(+). The protein operates within amino-acid biosynthesis; L-arginine biosynthesis; L-arginine from L-ornithine and carbamoyl phosphate: step 2/3. It participates in nitrogen metabolism; urea cycle; (N(omega)-L-arginino)succinate from L-aspartate and L-citrulline: step 1/1. Its function is as follows. One of the enzymes of the urea cycle, the metabolic pathway transforming neurotoxic amonia produced by protein catabolism into inocuous urea in the liver of ureotelic animals. Catalyzes the formation of arginosuccinate from aspartate, citrulline and ATP and together with ASL it is responsible for the biosynthesis of arginine in most body tissues. This is Argininosuccinate synthase from Bos taurus (Bovine).